The chain runs to 478 residues: Zinc finger C3HC-type protein 1-like (478 aa).

Residues 93–147 (CAKYGWSNIECDMLKCSSCNAYLCASLQPVLDFSKYKQRCVELQEALRKAHEKFC) form a C3HC-type zinc finger. The disordered stretch occupies residues 285 to 389 (LSAPNTPVSP…SSSSDTSPRG (105 aa)). The segment covering 351–363 (SMGQGESSGLSNE) has biased composition (polar residues). Positions 377–388 (LCSSSSSDTSPR) are enriched in low complexity.

Phosphorylated. May also be weakly phosphorylated on Tyr residues.

The protein resides in the nucleus. It is found in the nucleus envelope. In terms of biological role, required for proper positioning of a substantial amount of TPR at the nuclear basket (NB) through interaction with TPR. This is Zinc finger C3HC-type protein 1-like (zc3hc1) from Xenopus tropicalis (Western clawed frog).